A 714-amino-acid chain; its full sequence is MADRVNASQGAAAAPTANGPGGVRNVVLVGPSGGGKTTLIEALLVAAKVLSRPGSVTEGTTVCDFDEAEIRQQRSVGLAVASLAYDGIKVNLVDTPGYADFVGELRAGLRAADCALFVIAANEGVDEPTKSLWQECSQVGMPRAVVITKLDHARANYREALTAAQDAFGDKVLPLYLPSGDGLIGLLSQALYEYADGKRTTRTPAESDTERIEEARGALIEGIIEESEDESLMERYLGGETIDESVLIQDLEKAVARGSFFPVIPVCSSTGVGTLELLEVATRGFPSPMEHPLPEVFTPQGVPHAELACDNDAPLLAEVVKTTSDPYVGRVSLVRVFSGTIRPDTTVHVSGHFSSFFGGGTSNTHPDHDEDERIGVLSFPLGKQQRPAAAVVAGDICAIGKLSRAETGDTLSDKAEPLVLKPWTMPEPLLPIAIAAHAKTDEDKLSVGLGRLAAEDPTLRIEQNQETHQVVLWCMGEAHAGVVLDTLANRYGVSVDTIELRVPLRETFAGNAKGHGRHIKQSGGHGQYGVCDIEVEPLPEGSGFEFLDKVVGGAVPRQFIPNVEKGVRAQMDKGVHAGYPVVDIRVTLLDGKAHSVDSSDFAFQMAGALALREAAAATKVILLEPIDEISVLVPDDFVGAVLGDLSSRRGRVLGTETAGHDRTVIKAEVPQVELTRYAIDLRSLAHGAASFTRSFARYEPMPESAAARVKAGAG.

Residues 21 to 289 form the tr-type G domain; sequence GGVRNVVLVG…VATRGFPSPM (269 aa). A G1 region spans residues 30-37; it reads GPSGGGKT. 30–37 is a binding site for GTP; sequence GPSGGGKT. Residues 73–77 form a G2 region; that stretch reads QRSVG. The tract at residues 94–97 is G3; that stretch reads DTPG. GTP is bound by residues 94-98 and 148-151; these read DTPGY and TKLD. Residues 148–151 form a G4 region; that stretch reads TKLD. Positions 267–269 are G5; sequence CSS.

The protein belongs to the TRAFAC class translation factor GTPase superfamily. Classic translation factor GTPase family. EF-G/EF-2 subfamily.

The protein is Elongation factor G-like protein of Mycobacterium tuberculosis (strain ATCC 25618 / H37Rv).